Here is a 378-residue protein sequence, read N- to C-terminus: Ribosomal RNA large subunit methyltransferase G (378 aa).

This sequence belongs to the methyltransferase superfamily. RlmG family.

Its subcellular location is the cytoplasm. The enzyme catalyses guanosine(1835) in 23S rRNA + S-adenosyl-L-methionine = N(2)-methylguanosine(1835) in 23S rRNA + S-adenosyl-L-homocysteine + H(+). Its function is as follows. Specifically methylates the guanine in position 1835 (m2G1835) of 23S rRNA. This is Ribosomal RNA large subunit methyltransferase G from Citrobacter koseri (strain ATCC BAA-895 / CDC 4225-83 / SGSC4696).